A 159-amino-acid polypeptide reads, in one-letter code: MSSADKNLSSYSGEIPNLSSRVFGIVVAEWNEEITEPLYEGAVEVLLKHGIPKANIIRTNVPGTFELSLGAQWLAMKKGVDAVICLGCVIQGETRHFDFICNAVSIGITEVNLKFNKPVIFGVLTTDNKEQAFDRAGGKHGNKGDEAAITALKMLAQTI.

Residues Trp-30, 64-66, and 88-90 contribute to the 5-amino-6-(D-ribitylamino)uracil site; these read TFE and CVI. Residue 93–94 participates in (2S)-2-hydroxy-3-oxobutyl phosphate binding; that stretch reads ET. His-96 serves as the catalytic Proton donor. Phe-121 is a binding site for 5-amino-6-(D-ribitylamino)uracil. Position 135 (Arg-135) interacts with (2S)-2-hydroxy-3-oxobutyl phosphate.

This sequence belongs to the DMRL synthase family.

The catalysed reaction is (2S)-2-hydroxy-3-oxobutyl phosphate + 5-amino-6-(D-ribitylamino)uracil = 6,7-dimethyl-8-(1-D-ribityl)lumazine + phosphate + 2 H2O + H(+). The protein operates within cofactor biosynthesis; riboflavin biosynthesis; riboflavin from 2-hydroxy-3-oxobutyl phosphate and 5-amino-6-(D-ribitylamino)uracil: step 1/2. Functionally, catalyzes the formation of 6,7-dimethyl-8-ribityllumazine by condensation of 5-amino-6-(D-ribitylamino)uracil with 3,4-dihydroxy-2-butanone 4-phosphate. This is the penultimate step in the biosynthesis of riboflavin. This is 6,7-dimethyl-8-ribityllumazine synthase from Cytophaga hutchinsonii (strain ATCC 33406 / DSM 1761 / CIP 103989 / NBRC 15051 / NCIMB 9469 / D465).